A 408-amino-acid polypeptide reads, in one-letter code: Arginine biosynthesis bifunctional protein ArgJ (408 aa).

Residues threonine 156, lysine 182, threonine 193, glutamate 279, asparagine 403, and serine 408 each contribute to the substrate site. The active-site Nucleophile is threonine 193.

The protein belongs to the ArgJ family. As to quaternary structure, heterotetramer of two alpha and two beta chains.

It localises to the cytoplasm. The enzyme catalyses N(2)-acetyl-L-ornithine + L-glutamate = N-acetyl-L-glutamate + L-ornithine. It catalyses the reaction L-glutamate + acetyl-CoA = N-acetyl-L-glutamate + CoA + H(+). Its pathway is amino-acid biosynthesis; L-arginine biosynthesis; L-ornithine and N-acetyl-L-glutamate from L-glutamate and N(2)-acetyl-L-ornithine (cyclic): step 1/1. The protein operates within amino-acid biosynthesis; L-arginine biosynthesis; N(2)-acetyl-L-ornithine from L-glutamate: step 1/4. Its function is as follows. Catalyzes two activities which are involved in the cyclic version of arginine biosynthesis: the synthesis of N-acetylglutamate from glutamate and acetyl-CoA as the acetyl donor, and of ornithine by transacetylation between N(2)-acetylornithine and glutamate. In Bordetella pertussis (strain Tohama I / ATCC BAA-589 / NCTC 13251), this protein is Arginine biosynthesis bifunctional protein ArgJ.